The primary structure comprises 559 residues: Sesquiterpene synthase TPS3 (559 aa).

(2E,6E)-farnesyl diphosphate is bound by residues R275, D312, D316, R453, and D456. Residues D312 and D316 each coordinate Mg(2+). The short motif at 312–316 (DDTYD) is the DDXXD motif element. 3 residues coordinate Mg(2+): D456, T460, and E464.

It belongs to the terpene synthase family. Tpsa subfamily. Monomer. Requires Mg(2+) as cofactor. Highly expressed in glandular trichomes. Expressed in roots and leaves.

The protein localises to the cytoplasm. It carries out the reaction (2E,6E)-farnesyl diphosphate = (+)-(R)-germacrene A + diphosphate. Its pathway is secondary metabolite biosynthesis; terpenoid biosynthesis. In terms of biological role, sesquiterpene synthase involved in the biosynthesis of volatile compounds. Mediates the conversion of (2E,6E)-farnesyl diphosphate (FPP) into (+)-(R)-germacrene A. The protein is Sesquiterpene synthase TPS3 of Xanthium strumarium (Rough cocklebur).